Reading from the N-terminus, the 249-residue chain is Proteasome subunit alpha type-7-1 (249 aa).

At serine 177 the chain carries Phosphoserine.

It belongs to the peptidase T1A family. As to quaternary structure, the 26S proteasome consists of a 20S proteasome core and two 19S regulatory subunits. The 20S proteasome core is composed of 28 subunits that are arranged in four stacked rings, resulting in a barrel-shaped structure. The two end rings are each formed by seven alpha subunits, and the two central rings are each formed by seven beta subunits. The catalytic chamber with the active sites is on the inside of the barrel. Interacts with PI31; this interaction is reduced by PI31 ADP-ribosylation.

The protein localises to the cytoplasm. Its subcellular location is the nucleus. The proteasome is a multicatalytic proteinase complex which is characterized by its ability to cleave peptides with Arg, Phe, Tyr, Leu, and Glu adjacent to the leaving group at neutral or slightly basic pH. The proteasome has an ATP-dependent proteolytic activity. This Drosophila melanogaster (Fruit fly) protein is Proteasome subunit alpha type-7-1 (Prosalpha4).